Here is a 103-residue protein sequence, read N- to C-terminus: Large ribosomal subunit protein bL21 (103 aa).

This sequence belongs to the bacterial ribosomal protein bL21 family. Part of the 50S ribosomal subunit. Contacts protein L20.

Functionally, this protein binds to 23S rRNA in the presence of protein L20. In Alkaliphilus oremlandii (strain OhILAs) (Clostridium oremlandii (strain OhILAs)), this protein is Large ribosomal subunit protein bL21.